A 256-amino-acid chain; its full sequence is 2-C-methyl-D-erythritol 4-phosphate cytidylyltransferase (256 aa).

This sequence belongs to the IspD/TarI cytidylyltransferase family. IspD subfamily.

The enzyme catalyses 2-C-methyl-D-erythritol 4-phosphate + CTP + H(+) = 4-CDP-2-C-methyl-D-erythritol + diphosphate. It functions in the pathway isoprenoid biosynthesis; isopentenyl diphosphate biosynthesis via DXP pathway; isopentenyl diphosphate from 1-deoxy-D-xylulose 5-phosphate: step 2/6. Functionally, catalyzes the formation of 4-diphosphocytidyl-2-C-methyl-D-erythritol from CTP and 2-C-methyl-D-erythritol 4-phosphate (MEP). This chain is 2-C-methyl-D-erythritol 4-phosphate cytidylyltransferase, found in Corynebacterium glutamicum (strain ATCC 13032 / DSM 20300 / JCM 1318 / BCRC 11384 / CCUG 27702 / LMG 3730 / NBRC 12168 / NCIMB 10025 / NRRL B-2784 / 534).